The following is a 177-amino-acid chain: Trafficking regulator of GLUT4 1 (177 aa).

Over 1–105 (MAHPVQSEFP…QDQEAPRDYL (105 aa)) the chain is Cytoplasmic. Phosphoserine is present on residues Ser-48, Ser-87, and Ser-88. Residues 71 to 92 (EAPLPRSPSRASSRRASSIATT) form a disordered region. Residues 72–88 (APLPRSPSRASSRRASS) show a composition bias toward low complexity. The helical intramembrane region spans 106 to 126 (ILAVVACFCPVWPLNLIPLII). The Cytoplasmic segment spans residues 127 to 153 (SIMSRSSMQQGNVDGARRLGRLARLLS). The chain crosses the membrane as a helical span at residues 154 to 174 (ITLIIMGIVIIMVAVTVNFTV). Over 175–177 (QKK) the chain is Extracellular.

The protein belongs to the CD225/Dispanin family. In terms of assembly, interacts with SLC2A4; the interaction is required for proper SLC2A4 reacycling after insulin stimulation. As to expression, expressed at high levels in heart, mammary gland, adrenal gland, stomach, smooth muscle and skeletal muscle, and at lower levels in brain and lung. Strongly down-regulated in lung cancer tissues, due to hypermethylation of the corresponding locus. Expressed in adipose tissue.

The protein localises to the cell membrane. It is found in the endomembrane system. It localises to the cytoplasm. The protein resides in the perinuclear region. Regulates insulin-mediated adipose tissue glucose uptake and transport by modulation of SLC2A4 recycling. Not required for SLC2A4 membrane fusion upon an initial stimulus, but rather is necessary for proper protein recycling during prolonged insulin stimulation. This Homo sapiens (Human) protein is Trafficking regulator of GLUT4 1.